Reading from the N-terminus, the 618-residue chain is Probable N-acetylgalactosaminyltransferase 6 (618 aa).

Topologically, residues 1-16 are cytoplasmic; the sequence is MIASLIRSRRRSRRCV. The helical; Signal-anchor for type II membrane protein transmembrane segment at 17–39 threads the bilayer; the sequence is VYSVFLFGFLALWGSFALALVFL. Over 40–618 the chain is Lumenal; the sequence is SDMYIGEDQI…TEMSWLPEHP (579 aa). Asn81 and Asn149 each carry an N-linked (GlcNAc...) asparagine glycan. 2 disulfide bridges follow: Cys147-Cys381 and Cys372-Cys452. The catalytic subdomain A stretch occupies residues 156–267; sequence LPTTSVIIVY…KGWLEPLLTR (112 aa). Asp197 and Arg228 together coordinate substrate. Mn(2+) is bound at residue Asp251. Ser252 provides a ligand contact to substrate. His253 lines the Mn(2+) pocket. Residues 327-389 form a catalytic subdomain B region; that stretch reads PIESPTMAGG…PCSHVGHVFR (63 aa). Residue Trp358 coordinates substrate. A Mn(2+)-binding site is contributed by His386. A substrate-binding site is contributed by Arg389. One can recognise a Ricin B-type lectin domain in the interval 474–609; sequence RFGRMTSSSN…SNDRQNWTIT (136 aa). Asn483 is a glycosylation site (N-linked (GlcNAc...) asparagine). Intrachain disulfides connect Cys487/Cys505, Cys530/Cys550, and Cys575/Cys597. A glycan (N-linked (GlcNAc...) asparagine) is linked at Asn605.

The protein belongs to the glycosyltransferase 2 family. GalNAc-T subfamily. It depends on Mn(2+) as a cofactor.

It is found in the golgi apparatus membrane. It participates in protein modification; protein glycosylation. Probable glycopeptide transferase involved in O-linked oligosaccharide biosynthesis. Glycopeptide transferases catalyze the transfer of an N-acetyl-D-galactosamine residue to an already glycosylated peptide. In contrast to other members of the family, it does not act as a peptide transferase that transfers GalNAc onto serine or threonine residue on peptides that have been tested. Some peptide transferase activity is however not excluded, considering that its appropriate peptide substrate may remain unidentified. The chain is Probable N-acetylgalactosaminyltransferase 6 (gly-6) from Caenorhabditis elegans.